A 225-amino-acid polypeptide reads, in one-letter code: NAD(P)H-quinone oxidoreductase subunit K, chloroplastic (225 aa).

Positions 43, 44, 108, and 139 each coordinate [4Fe-4S] cluster.

This sequence belongs to the complex I 20 kDa subunit family. NDH is composed of at least 16 different subunits, 5 of which are encoded in the nucleus. [4Fe-4S] cluster is required as a cofactor.

It is found in the plastid. It localises to the chloroplast thylakoid membrane. The enzyme catalyses a plastoquinone + NADH + (n+1) H(+)(in) = a plastoquinol + NAD(+) + n H(+)(out). The catalysed reaction is a plastoquinone + NADPH + (n+1) H(+)(in) = a plastoquinol + NADP(+) + n H(+)(out). NDH shuttles electrons from NAD(P)H:plastoquinone, via FMN and iron-sulfur (Fe-S) centers, to quinones in the photosynthetic chain and possibly in a chloroplast respiratory chain. The immediate electron acceptor for the enzyme in this species is believed to be plastoquinone. Couples the redox reaction to proton translocation, and thus conserves the redox energy in a proton gradient. The sequence is that of NAD(P)H-quinone oxidoreductase subunit K, chloroplastic from Nicotiana tabacum (Common tobacco).